Here is a 227-residue protein sequence, read N- to C-terminus: tRNA (guanine-N(7)-)-methyltransferase (227 aa).

S-adenosyl-L-methionine-binding residues include glutamate 58, glutamate 83, aspartate 110, and aspartate 132. Aspartate 132 is a catalytic residue. Substrate is bound by residues lysine 136, aspartate 168, and 205 to 208; that span reads TRFE.

Belongs to the class I-like SAM-binding methyltransferase superfamily. TrmB family.

The catalysed reaction is guanosine(46) in tRNA + S-adenosyl-L-methionine = N(7)-methylguanosine(46) in tRNA + S-adenosyl-L-homocysteine. It functions in the pathway tRNA modification; N(7)-methylguanine-tRNA biosynthesis. Functionally, catalyzes the formation of N(7)-methylguanine at position 46 (m7G46) in tRNA. This Acidithiobacillus ferrooxidans (strain ATCC 23270 / DSM 14882 / CIP 104768 / NCIMB 8455) (Ferrobacillus ferrooxidans (strain ATCC 23270)) protein is tRNA (guanine-N(7)-)-methyltransferase.